Consider the following 521-residue polypeptide: Protein NRT1/ PTR FAMILY 4.2 (521 aa).

12 helical membrane-spanning segments follow: residues 30 to 50 (IVCV…FNFV), 65 to 85 (ANMV…GGFI), 89 to 109 (FVTH…GLIL), 133 to 153 (AILF…KASL), 172 to 192 (FFDW…TVVL), 204 to 224 (FNIS…GLPF), 297 to 317 (FLGL…VAQL), 338 to 358 (IPVP…IPLY), 381 to 401 (IGLG…VEAK), 413 to 433 (ISVL…MLTL), 451 to 471 (ISTA…TTLV), and 498 to 518 (LFYV…IFWA).

Belongs to the major facilitator superfamily. Proton-dependent oligopeptide transporter (POT/PTR) (TC 2.A.17) family. In terms of tissue distribution, expressed in siliques.

The protein resides in the membrane. Functionally, involved in abscisic acid transport. In Arabidopsis thaliana (Mouse-ear cress), this protein is Protein NRT1/ PTR FAMILY 4.2 (NPF4.2).